The primary structure comprises 159 residues: Transcription elongation factor GreA (159 aa).

A coiled-coil region spans residues 43-75; sequence LSENAEYDAAREEQSQLEAKIGEIENKLASATI.

This sequence belongs to the GreA/GreB family.

Necessary for efficient RNA polymerase transcription elongation past template-encoded arresting sites. The arresting sites in DNA have the property of trapping a certain fraction of elongating RNA polymerases that pass through, resulting in locked ternary complexes. Cleavage of the nascent transcript by cleavage factors such as GreA or GreB allows the resumption of elongation from the new 3'terminus. GreA releases sequences of 2 to 3 nucleotides. The sequence is that of Transcription elongation factor GreA from Chlorobaculum tepidum (strain ATCC 49652 / DSM 12025 / NBRC 103806 / TLS) (Chlorobium tepidum).